The chain runs to 252 residues: Chlorophyll a-b binding protein P4, chloroplastic (252 aa).

Trp-56 provides a ligand contact to chlorophyll b. Chlorophyll a is bound by residues Phe-76 and Glu-95. Arg-100 is a binding site for chlorophyll b. The next 2 helical transmembrane spans lie at 101-121 and 134-154; these read WAMLGVAGMLLPEVFTSIGII and YFASSSTLFVIEFILSHYVEI. Positions 137, 143, 153, and 156 each coordinate chlorophyll b. Chlorophyll a contacts are provided by Lys-203, Glu-204, Asn-207, Arg-209, Gln-221, and His-236.

This sequence belongs to the light-harvesting chlorophyll a/b-binding (LHC) protein family. In terms of assembly, the LHC complex consists of chlorophyll a-b binding proteins. Binds at least 14 chlorophylls (8 Chl-a and 6 Chl-b) and carotenoids such as lutein and neoxanthin. serves as cofactor. In terms of processing, photoregulated by reversible phosphorylation of its threonine residues.

It is found in the plastid. The protein localises to the chloroplast thylakoid membrane. The light-harvesting complex (LHC) functions as a light receptor, it captures and delivers excitation energy to photosystems with which it is closely associated. Its function is as follows. May channel protons produced in the catalytic Mn center of water oxidation into the thylakoid lumen. The sequence is that of Chlorophyll a-b binding protein P4, chloroplastic from Pisum sativum (Garden pea).